The sequence spans 141 residues: ATP synthase epsilon chain (141 aa).

It belongs to the ATPase epsilon chain family. In terms of assembly, F-type ATPases have 2 components, CF(1) - the catalytic core - and CF(0) - the membrane proton channel. CF(1) has five subunits: alpha(3), beta(3), gamma(1), delta(1), epsilon(1). CF(0) has three main subunits: a, b and c.

The protein resides in the cell inner membrane. Produces ATP from ADP in the presence of a proton gradient across the membrane. The chain is ATP synthase epsilon chain from Thioalkalivibrio sulfidiphilus (strain HL-EbGR7).